The primary structure comprises 221 residues: Ribosomal RNA small subunit methyltransferase Nep1 (221 aa).

S-adenosyl-L-methionine is bound by residues Gly-174, Gly-179, and Ile-196–Leu-201.

Belongs to the class IV-like SAM-binding methyltransferase superfamily. RNA methyltransferase NEP1 family. In terms of assembly, homodimer.

The enzyme catalyses a pseudouridine in rRNA + S-adenosyl-L-methionine = an N(1)-methylpseudouridine in rRNA + S-adenosyl-L-homocysteine + H(+). In terms of biological role, methyltransferase involved in ribosomal biogenesis. Specifically catalyzes the N1-methylation of the pseudouridine corresponding to position 914 in M.jannaschii 16S rRNA. The polypeptide is Ribosomal RNA small subunit methyltransferase Nep1 (Pyrobaculum calidifontis (strain DSM 21063 / JCM 11548 / VA1)).